A 310-amino-acid polypeptide reads, in one-letter code: Protein FAM153A (310 aa).

Disordered stretches follow at residues 39-58 (LGVP…LCPP), 108-136 (QTNG…HTME), 156-184 (SYNG…DLEE), and 250-297 (TITG…KKSR). Over residues 259–268 (SASPSSAPAE) the composition is skewed to low complexity. Residues 270-282 (ATEKTKVEEEVKT) show a composition bias toward basic and acidic residues. The segment covering 283–297 (RKPKKKTRKPSKKSR) has biased composition (basic residues).

This sequence belongs to the FAM153 family.

This chain is Protein FAM153A (FAM153A), found in Homo sapiens (Human).